A 181-amino-acid polypeptide reads, in one-letter code: Inner membrane-spanning protein YciB (181 aa).

5 helical membrane-spanning segments follow: residues 10–30 (LVIF…GALI), 50–70 (MHLI…ILHD), 72–92 (SFIK…LGVS), 118–138 (VTWY…YVAF), and 148–168 (FKVF…VVYL).

The protein belongs to the YciB family.

It is found in the cell inner membrane. Plays a role in cell envelope biogenesis, maintenance of cell envelope integrity and membrane homeostasis. This is Inner membrane-spanning protein YciB from Shewanella pealeana (strain ATCC 700345 / ANG-SQ1).